Reading from the N-terminus, the 290-residue chain is Endoplasmic reticulum-Golgi intermediate compartment protein 1 (290 aa).

The Cytoplasmic segment spans residues 1 to 26 (MPFDFRRFDIYRKVPKDLTQPTYTGA). Residues 27–47 (IISICCCLFILFLFLSELTGF) form a helical membrane-spanning segment. Topologically, residues 48 to 254 (ITTEVVNELY…RRQPLYRFIT (207 aa)) are lumenal. An N-linked (GlcNAc...) asparagine glycan is attached at N74. The helical transmembrane segment at 255–275 (TICAIIGGTFTVAGILDSCIF) threads the bilayer. Residues 276–290 (TASEAWKKIQLGKIH) are Cytoplasmic-facing.

This sequence belongs to the ERGIC family. May form a heteromeric complex composed of ERGIC1, ERGIC2 and ERGIC3. Within the complex, the interaction with ERGIC3 is direct. Interacts with ERGIC3/ERV46. Post-translationally, N-glycosylated.

The protein resides in the endoplasmic reticulum membrane. Its subcellular location is the endoplasmic reticulum-Golgi intermediate compartment membrane. It is found in the golgi apparatus membrane. Functionally, possible role in transport between endoplasmic reticulum and Golgi. The polypeptide is Endoplasmic reticulum-Golgi intermediate compartment protein 1 (Ergic1) (Mus musculus (Mouse)).